The sequence spans 178 residues: Protein GrpE (178 aa).

Basic and acidic residues-rich tracts occupy residues 1 to 19 (MAKHKQEEHPEDVEVKEEA) and 30 to 42 (SPEKSELELANER). Residues 1 to 42 (MAKHKQEEHPEDVEVKEEAVETAEQAESASPEKSELELANER) are disordered.

Belongs to the GrpE family. As to quaternary structure, homodimer.

It localises to the cytoplasm. Its function is as follows. Participates actively in the response to hyperosmotic and heat shock by preventing the aggregation of stress-denatured proteins, in association with DnaK and GrpE. It is the nucleotide exchange factor for DnaK and may function as a thermosensor. Unfolded proteins bind initially to DnaJ; upon interaction with the DnaJ-bound protein, DnaK hydrolyzes its bound ATP, resulting in the formation of a stable complex. GrpE releases ADP from DnaK; ATP binding to DnaK triggers the release of the substrate protein, thus completing the reaction cycle. Several rounds of ATP-dependent interactions between DnaJ, DnaK and GrpE are required for fully efficient folding. This chain is Protein GrpE, found in Streptococcus sanguinis (strain SK36).